The sequence spans 777 residues: Endonuclease MutS2 (777 aa).

328–335 provides a ligand contact to ATP; the sequence is GPNTGGKT. Residues 702–777 enclose the Smr domain; it reads LDIRGMNTLE…GDGATEVYLK (76 aa).

This sequence belongs to the DNA mismatch repair MutS family. MutS2 subfamily. In terms of assembly, homodimer. Binds to stalled ribosomes, contacting rRNA.

Endonuclease that is involved in the suppression of homologous recombination and thus may have a key role in the control of bacterial genetic diversity. Functionally, acts as a ribosome collision sensor, splitting the ribosome into its 2 subunits. Detects stalled/collided 70S ribosomes which it binds and splits by an ATP-hydrolysis driven conformational change. Acts upstream of the ribosome quality control system (RQC), a ribosome-associated complex that mediates the extraction of incompletely synthesized nascent chains from stalled ribosomes and their subsequent degradation. Probably generates substrates for RQC. The polypeptide is Endonuclease MutS2 (Carboxydothermus hydrogenoformans (strain ATCC BAA-161 / DSM 6008 / Z-2901)).